The sequence spans 37 residues: Large ribosomal subunit protein bL36A (37 aa).

The protein belongs to the bacterial ribosomal protein bL36 family.

This chain is Large ribosomal subunit protein bL36A, found in Leifsonia xyli subsp. xyli (strain CTCB07).